The following is a 100-amino-acid chain: Urease subunit gamma (100 aa).

Belongs to the urease gamma subunit family. In terms of assembly, heterotrimer of UreA (gamma), UreB (beta) and UreC (alpha) subunits. Three heterotrimers associate to form the active enzyme.

It localises to the cytoplasm. It carries out the reaction urea + 2 H2O + H(+) = hydrogencarbonate + 2 NH4(+). The protein operates within nitrogen metabolism; urea degradation; CO(2) and NH(3) from urea (urease route): step 1/1. The protein is Urease subunit gamma of Pseudoalteromonas translucida (strain TAC 125).